Here is a 590-residue protein sequence, read N- to C-terminus: Potassium-transporting ATPase potassium-binding subunit (590 aa).

4 helical membrane-spanning segments follow: residues 3–23, 63–83, 134–154, and 177–197; these read AFLLQLAIYLAVLLVLARPLG, HYALAVIAVNVLGALAVYALQ, GLAVQNFLSAATGIAVVIALI, and LYVLLPLSVIVAVFFVSQGAI. The disordered stretch occupies residues 217-244; that stretch reads PKTDAQGNPIKDAQGNPVTEKATTQKQT. 8 helical membrane-spanning segments follow: residues 284–304, 312–332, 359–379, 388–408, 411–431, 450–470, 515–535, and 558–578; these read FVQMLSIFLIPAALCFTFGAM, WAVLASMTILFVVLAVFEMWA, FGVVASSLFVTITTAASCGAV, ALGGFVPMFLIQLGEVVFGGV, GLYGMLVYAILAVFIAGLMIG, SIAILVTPLLVLVGTAVAVLA, VALGIVMWLGRFWIIVPVLAM, and LFVVLLIGSVLLVGALTYIPA.

This sequence belongs to the KdpA family. The system is composed of three essential subunits: KdpA, KdpB and KdpC.

It is found in the cell inner membrane. Its function is as follows. Part of the high-affinity ATP-driven potassium transport (or Kdp) system, which catalyzes the hydrolysis of ATP coupled with the electrogenic transport of potassium into the cytoplasm. This subunit binds the periplasmic potassium ions and delivers the ions to the membrane domain of KdpB through an intramembrane tunnel. The chain is Potassium-transporting ATPase potassium-binding subunit from Ralstonia nicotianae (strain ATCC BAA-1114 / GMI1000) (Ralstonia solanacearum).